The chain runs to 501 residues: 2,3-bisphosphoglycerate-independent phosphoglycerate mutase (501 aa).

Residues Asp-12 and Ser-62 each contribute to the Mn(2+) site. The Phosphoserine intermediate role is filled by Ser-62. Substrate is bound by residues His-121, 150–151 (RD), Arg-182, Arg-188, 253–256 (RSDR), and Lys-323. Mn(2+)-binding residues include Asp-390, His-394, Asp-431, His-432, and His-450.

This sequence belongs to the BPG-independent phosphoglycerate mutase family. As to quaternary structure, monomer. Mn(2+) is required as a cofactor.

The catalysed reaction is (2R)-2-phosphoglycerate = (2R)-3-phosphoglycerate. It functions in the pathway carbohydrate degradation; glycolysis; pyruvate from D-glyceraldehyde 3-phosphate: step 3/5. Its function is as follows. Catalyzes the interconversion of 2-phosphoglycerate and 3-phosphoglycerate. This chain is 2,3-bisphosphoglycerate-independent phosphoglycerate mutase, found in Ehrlichia canis (strain Jake).